Consider the following 296-residue polypeptide: Aquaporin NIP1-1 (296 aa).

Met1 carries the post-translational modification N-acetylmethionine. Transmembrane regions (helical) follow at residues 57–77 (LIAEFLGTYFLVFTGCASVVV) and 84–104 (VVTLPGIAIVWGLTIMVLIYS). Positions 114 to 116 (NPA) match the NPA 1 motif. Helical transmembrane passes span 136 to 156 (VISQVIGSTLAAATLRLLFGL), 180 to 200 (AFTMEFIVTFYLMFIISGVAT), and 205 to 225 (IGELAGLAIGSTVLLNVLIAA). The NPA 2 signature appears at 233-235 (NPG). Residues 249 to 269 (GIWIYLVAPTLGAIAGAWVYN) traverse the membrane as a helical segment. At Ser286 the chain carries Phosphoserine.

This sequence belongs to the MIP/aquaporin (TC 1.A.8) family. NIP (TC 1.A.8.12) subfamily. As to expression, expressed in roots.

The protein resides in the membrane. Water channel probably required to promote glycerol permeability and water transport across cell membranes. The chain is Aquaporin NIP1-1 (NIP1-1) from Arabidopsis thaliana (Mouse-ear cress).